The following is a 591-amino-acid chain: Cineole synthase 1, chloroplastic (591 aa).

The transit peptide at 1–44 (MSSLIMQVVIPKPAKFFHNNLFSLSSKRHRFSTTTTTRGGRWAR) directs the protein to the chloroplast. The (2E)-geranyl diphosphate site is built by arginine 308, aspartate 345, aspartate 349, arginine 486, and aspartate 489. The Mg(2+) site is built by aspartate 345 and aspartate 349. The DDXXD motif motif lies at 345-349 (DDVFD). Residues aspartate 489, threonine 493, and glutamate 497 each coordinate Mg(2+).

Belongs to the terpene synthase family. Tpsb subfamily. In terms of assembly, monomer. The cofactor is Mg(2+). Requires Mn(2+) as cofactor.

The protein localises to the plastid. It localises to the chloroplast. The catalysed reaction is (2E)-geranyl diphosphate + H2O = 1,8-cineole + diphosphate. It carries out the reaction (2E)-geranyl diphosphate = alpha-pinene + diphosphate. The enzyme catalyses (2E)-geranyl diphosphate = beta-pinene + diphosphate. It catalyses the reaction (2E)-geranyl diphosphate + H2O = (S)-alpha-terpineol + diphosphate. The catalysed reaction is (2E)-geranyl diphosphate = beta-myrcene + diphosphate. It carries out the reaction (2E)-geranyl diphosphate = sabinene + diphosphate. It participates in secondary metabolite biosynthesis; terpenoid biosynthesis. Its function is as follows. Monoterpene synthase (TPS) involved in the biosynthesis of monoterpene natural products, components of the chemical defense arsenal. Catalyzes the conversion of (2E)-geranyl diphosphate (GPP) into 1,8-cineole, and, as minor products, alpha-terpineol, beta-pinene, alpha-pinene, sabinene and myrcene. The chain is Cineole synthase 1, chloroplastic from Salvia fruticosa (Greek sage).